Reading from the N-terminus, the 91-residue chain is C-C motif chemokine 5 (91 aa).

The signal sequence occupies residues 1–23; the sequence is MKVSAARLAVILVATALCAPASA. Disulfide bonds link Cys33–Cys57 and Cys34–Cys73.

This sequence belongs to the intercrine beta (chemokine CC) family.

The protein localises to the secreted. Its function is as follows. Chemoattractant for blood monocytes, memory T-helper cells and eosinophils. Causes the release of histamine from basophils and activates eosinophils. May activate several chemokine receptors including CCR1, CCR3, CCR4 and CCR5. May also be an agonist of the G protein-coupled receptor GPR75. Together with GPR75, may play a role in neuron survival through activation of a downstream signaling pathway involving the PI3, Akt and MAP kinases. By activating GPR75 may also play a role in insulin secretion by islet cells. The polypeptide is C-C motif chemokine 5 (CCL5) (Macaca mulatta (Rhesus macaque)).